Consider the following 147-residue polypeptide: Cyanate hydratase (147 aa).

Active-site residues include arginine 88, glutamate 91, and serine 114.

This sequence belongs to the cyanase family.

The enzyme catalyses cyanate + hydrogencarbonate + 3 H(+) = NH4(+) + 2 CO2. Its function is as follows. Catalyzes the reaction of cyanate with bicarbonate to produce ammonia and carbon dioxide. The polypeptide is Cyanate hydratase (Polaromonas sp. (strain JS666 / ATCC BAA-500)).